Reading from the N-terminus, the 234-residue chain is Putative lipoyltransferase 2, mitochondrial (234 aa).

Residues 1–28 constitute a mitochondrion transit peptide; it reads MPFVRPLVTVVRAGRHSYSAGLQLQQRL. Positions 39 to 220 constitute a BPL/LPL catalytic domain; the sequence is AEFRNYLVLQ…SFAKVFECRL (182 aa). Residues 83-90, 150-152, and 163-165 each bind substrate; these read RGGLITFH, AIG, and GIG. The active-site Acyl-thioester intermediate is the Cys181.

Belongs to the LipB family.

The protein localises to the mitochondrion. It carries out the reaction octanoyl-[ACP] + L-lysyl-[protein] = N(6)-octanoyl-L-lysyl-[protein] + holo-[ACP] + H(+). It functions in the pathway protein modification; protein lipoylation via endogenous pathway; protein N(6)-(lipoyl)lysine from octanoyl-[acyl-carrier-protein]: step 1/2. In terms of biological role, catalyzes the transfer of endogenously produced octanoic acid from octanoyl-acyl-carrier-protein onto the lipoyl domains of lipoate-dependent enzymes. Lipoyl-ACP can also act as a substrate although octanoyl-ACP is likely to be the physiological substrate. This is Putative lipoyltransferase 2, mitochondrial from Drosophila melanogaster (Fruit fly).